The following is a 265-amino-acid chain: 4-diphosphocytidyl-2-C-methyl-D-erythritol kinase (265 aa).

Lys-8 is an active-site residue. 95–105 (PIGAGLGGGSS) is an ATP binding site. Asp-135 is an active-site residue.

It belongs to the GHMP kinase family. IspE subfamily.

The enzyme catalyses 4-CDP-2-C-methyl-D-erythritol + ATP = 4-CDP-2-C-methyl-D-erythritol 2-phosphate + ADP + H(+). It functions in the pathway isoprenoid biosynthesis; isopentenyl diphosphate biosynthesis via DXP pathway; isopentenyl diphosphate from 1-deoxy-D-xylulose 5-phosphate: step 3/6. Its function is as follows. Catalyzes the phosphorylation of the position 2 hydroxy group of 4-diphosphocytidyl-2C-methyl-D-erythritol. This is 4-diphosphocytidyl-2-C-methyl-D-erythritol kinase from Ureaplasma urealyticum serovar 10 (strain ATCC 33699 / Western).